A 366-amino-acid polypeptide reads, in one-letter code: UDP-N-acetylglucosamine 2-epimerase (366 aa).

Histidine 207 is a catalytic residue.

The protein belongs to the UDP-N-acetylglucosamine 2-epimerase family. In terms of assembly, homodimer.

The protein localises to the cytoplasm. The enzyme catalyses UDP-N-acetyl-alpha-D-glucosamine = UDP-N-acetyl-alpha-D-mannosamine. Functionally, catalyzes the reversible epimerization at C-2 of UDP-N-acetylglucosamine (UDP-GlcNAc) to produce UDP-N-acetylmannosamine (UDP-ManNAc), the activated donor of ManNAc residues. This Methanocaldococcus jannaschii (strain ATCC 43067 / DSM 2661 / JAL-1 / JCM 10045 / NBRC 100440) (Methanococcus jannaschii) protein is UDP-N-acetylglucosamine 2-epimerase (wecB).